A 347-amino-acid polypeptide reads, in one-letter code: Phosphate acyltransferase (347 aa).

It belongs to the PlsX family. Homodimer. Probably interacts with PlsY.

It localises to the cytoplasm. It carries out the reaction a fatty acyl-[ACP] + phosphate = an acyl phosphate + holo-[ACP]. It functions in the pathway lipid metabolism; phospholipid metabolism. Functionally, catalyzes the reversible formation of acyl-phosphate (acyl-PO(4)) from acyl-[acyl-carrier-protein] (acyl-ACP). This enzyme utilizes acyl-ACP as fatty acyl donor, but not acyl-CoA. The sequence is that of Phosphate acyltransferase from Syntrophotalea carbinolica (strain DSM 2380 / NBRC 103641 / GraBd1) (Pelobacter carbinolicus).